Reading from the N-terminus, the 143-residue chain is Transcriptional regulator SlyA (143 aa).

Residues 2 to 135 enclose the HTH marR-type domain; that stretch reads ESTLGSDLAR…LSTLVQKLEQ (134 aa). A DNA-binding region (H-T-H motif) is located at residues 49 to 72; it reads QIQLAKAIGIEQPSLVRTLDQLEE.

The protein belongs to the SlyA family. As to quaternary structure, homodimer.

Functionally, transcription regulator that can specifically activate or repress expression of target genes. Regulates the cpm operon, which contains cpmA, cpmB, cpmC, cpmD, cpmE, cpmF, cpmG and cpmH, involved in carbapenem-like antibiotic production. This Photorhabdus laumondii subsp. laumondii (strain DSM 15139 / CIP 105565 / TT01) (Photorhabdus luminescens subsp. laumondii) protein is Transcriptional regulator SlyA.